The primary structure comprises 421 residues: uncharacterized protein (421 aa).

This is an uncharacterized protein from Caenorhabditis elegans.